A 105-amino-acid chain; its full sequence is Ribosomal silencing factor RsfS (105 aa).

The protein belongs to the Iojap/RsfS family. As to quaternary structure, interacts with ribosomal protein uL14 (rplN).

Its subcellular location is the cytoplasm. Its function is as follows. Functions as a ribosomal silencing factor. Interacts with ribosomal protein uL14 (rplN), blocking formation of intersubunit bridge B8. Prevents association of the 30S and 50S ribosomal subunits and the formation of functional ribosomes, thus repressing translation. The sequence is that of Ribosomal silencing factor RsfS from Escherichia coli O6:H1 (strain CFT073 / ATCC 700928 / UPEC).